We begin with the raw amino-acid sequence, 44 residues long: Putative protein PsbN (44 aa).

The chain crosses the membrane as a helical span at residues Ile-3 to Ser-23.

The protein belongs to the PsbN family.

The protein resides in the plastid. It localises to the chloroplast thylakoid membrane. Functionally, may play a role in photosystem I and II biogenesis. The protein is Putative protein PsbN of Euglena gracilis.